A 227-amino-acid chain; its full sequence is Cytochrome c oxidase subunit 2 (227 aa).

Topologically, residues 1–26 are mitochondrial intermembrane; that stretch reads MATWSNFNLQNSASPLMEQIIFFHDH. A helical transmembrane segment spans residues 27-51; sequence TLVILIMITILVGYLMISLFFNSYI. The Mitochondrial matrix portion of the chain corresponds to 52 to 62; sequence NRFLLEGQMIE. Residues 63-81 traverse the membrane as a helical segment; the sequence is LIWTILPAITLIFIALPSL. Residues 82-227 are Mitochondrial intermembrane-facing; the sequence is RLLYLLDELN…NFINWINNYS (146 aa). Cu cation is bound by residues His161, Cys196, Glu198, Cys200, His204, and Met207. Glu198 provides a ligand contact to Mg(2+).

This sequence belongs to the cytochrome c oxidase subunit 2 family. As to quaternary structure, component of the cytochrome c oxidase (complex IV, CIV), a multisubunit enzyme composed of a catalytic core of 3 subunits and several supernumerary subunits. The complex exists as a monomer or a dimer and forms supercomplexes (SCs) in the inner mitochondrial membrane with ubiquinol-cytochrome c oxidoreductase (cytochrome b-c1 complex, complex III, CIII). Cu cation is required as a cofactor.

Its subcellular location is the mitochondrion inner membrane. It catalyses the reaction 4 Fe(II)-[cytochrome c] + O2 + 8 H(+)(in) = 4 Fe(III)-[cytochrome c] + 2 H2O + 4 H(+)(out). Its function is as follows. Component of the cytochrome c oxidase, the last enzyme in the mitochondrial electron transport chain which drives oxidative phosphorylation. The respiratory chain contains 3 multisubunit complexes succinate dehydrogenase (complex II, CII), ubiquinol-cytochrome c oxidoreductase (cytochrome b-c1 complex, complex III, CIII) and cytochrome c oxidase (complex IV, CIV), that cooperate to transfer electrons derived from NADH and succinate to molecular oxygen, creating an electrochemical gradient over the inner membrane that drives transmembrane transport and the ATP synthase. Cytochrome c oxidase is the component of the respiratory chain that catalyzes the reduction of oxygen to water. Electrons originating from reduced cytochrome c in the intermembrane space (IMS) are transferred via the dinuclear copper A center (CU(A)) of subunit 2 and heme A of subunit 1 to the active site in subunit 1, a binuclear center (BNC) formed by heme A3 and copper B (CU(B)). The BNC reduces molecular oxygen to 2 water molecules using 4 electrons from cytochrome c in the IMS and 4 protons from the mitochondrial matrix. This Choristoneura fumiferana (Spruce budworm moth) protein is Cytochrome c oxidase subunit 2 (COII).